The sequence spans 451 residues: Chromosomal replication initiator protein DnaA (451 aa).

Residues 1–73 (MQDNLPQIWE…SNALKQTTSK (73 aa)) form a domain I, interacts with DnaA modulators region. A domain II region spans residues 73-113 (KNFEIRFIVPSEEKISKTEESQKKLEGSVNISVASDQFVSN). The interval 114 to 330 (NLNPKYTFDT…GALIRIVAYS (217 aa)) is domain III, AAA+ region. The ATP site is built by glycine 158, glycine 160, lysine 161, and threonine 162. Positions 331–451 (SLTNSEITVE…ERIAKEIKGD (121 aa)) are domain IV, binds dsDNA.

This sequence belongs to the DnaA family. In terms of assembly, oligomerizes as a right-handed, spiral filament on DNA at oriC.

The protein resides in the cytoplasm. In terms of biological role, plays an essential role in the initiation and regulation of chromosomal replication. ATP-DnaA binds to the origin of replication (oriC) to initiate formation of the DNA replication initiation complex once per cell cycle. Binds the DnaA box (a 9 base pair repeat at the origin) and separates the double-stranded (ds)DNA. Forms a right-handed helical filament on oriC DNA; dsDNA binds to the exterior of the filament while single-stranded (ss)DNA is stabiized in the filament's interior. The ATP-DnaA-oriC complex binds and stabilizes one strand of the AT-rich DNA unwinding element (DUE), permitting loading of DNA polymerase. After initiation quickly degrades to an ADP-DnaA complex that is not apt for DNA replication. Binds acidic phospholipids. This chain is Chromosomal replication initiator protein DnaA, found in Alkaliphilus oremlandii (strain OhILAs) (Clostridium oremlandii (strain OhILAs)).